The sequence spans 206 residues: tRNA (guanine-N(7)-)-methyltransferase (206 aa).

Residues E37, E62, D89, and D112 each contribute to the S-adenosyl-L-methionine site. D112 is a catalytic residue. Positions 116 and 148 each coordinate substrate.

The protein belongs to the class I-like SAM-binding methyltransferase superfamily. TrmB family.

The enzyme catalyses guanosine(46) in tRNA + S-adenosyl-L-methionine = N(7)-methylguanosine(46) in tRNA + S-adenosyl-L-homocysteine. Its pathway is tRNA modification; N(7)-methylguanine-tRNA biosynthesis. Its function is as follows. Catalyzes the formation of N(7)-methylguanine at position 46 (m7G46) in tRNA. In Myxococcus xanthus (strain DK1622), this protein is tRNA (guanine-N(7)-)-methyltransferase.